Consider the following 516-residue polypeptide: Squalene epoxidase 5 (516 aa).

2 helical membrane passes run 3–23 and 45–65; these read FTNV…VFYV and ATDV…YALA. Residues 55–56, 75–76, Arg83, Phe88, Arg156, Val172, Asp335, and Met348 contribute to the FAD site; these read VG and ER. A helical transmembrane segment spans residues 446–466; it reads LIYHLCAITLSSIGHLLSPFP.

It belongs to the squalene monooxygenase family. FAD is required as a cofactor. In terms of tissue distribution, expressed in seedlings, leaves, stems and inflorescences. Detected in siliques.

It localises to the membrane. It carries out the reaction squalene + reduced [NADPH--hemoprotein reductase] + O2 = (S)-2,3-epoxysqualene + oxidized [NADPH--hemoprotein reductase] + H2O + H(+). The protein operates within terpene metabolism; lanosterol biosynthesis; lanosterol from farnesyl diphosphate: step 2/3. In terms of biological role, catalyzes the stereospecific oxidation of squalene to (S)-2,3-epoxysqualene, and is considered to be a rate-limiting enzyme in steroid biosynthesis. This chain is Squalene epoxidase 5 (SQE5), found in Arabidopsis thaliana (Mouse-ear cress).